A 222-amino-acid polypeptide reads, in one-letter code: Uracil-DNA glycosylase (222 aa).

Residue aspartate 61 is the Proton acceptor of the active site.

It belongs to the uracil-DNA glycosylase (UDG) superfamily. UNG family.

The protein localises to the cytoplasm. It carries out the reaction Hydrolyzes single-stranded DNA or mismatched double-stranded DNA and polynucleotides, releasing free uracil.. Excises uracil residues from the DNA which can arise as a result of misincorporation of dUMP residues by DNA polymerase or due to deamination of cytosine. The sequence is that of Uracil-DNA glycosylase from Actinobacillus succinogenes (strain ATCC 55618 / DSM 22257 / CCUG 43843 / 130Z).